A 476-amino-acid chain; its full sequence is Viral inhibitor of caspase-8-induced apoptosis (476 aa).

This sequence belongs to the herpesviridae US22 family. In terms of assembly, interacts with host pro-caspase-8/CASP8; this interaction inhibits CASP8 activation.

In terms of biological role, plays a role in the inhibition of apoptosis by interacting with the pro-domain of pro-caspase-8/CASP8 and thus preventing its activation. This is Viral inhibitor of caspase-8-induced apoptosis (UL36) from Human cytomegalovirus (strain Merlin) (HHV-5).